Reading from the N-terminus, the 217-residue chain is 3-isopropylmalate dehydratase small subunit (217 aa).

Belongs to the LeuD family. LeuD type 1 subfamily. Heterodimer of LeuC and LeuD.

The enzyme catalyses (2R,3S)-3-isopropylmalate = (2S)-2-isopropylmalate. It participates in amino-acid biosynthesis; L-leucine biosynthesis; L-leucine from 3-methyl-2-oxobutanoate: step 2/4. Catalyzes the isomerization between 2-isopropylmalate and 3-isopropylmalate, via the formation of 2-isopropylmaleate. The polypeptide is 3-isopropylmalate dehydratase small subunit (Paracidovorax citrulli (strain AAC00-1) (Acidovorax citrulli)).